The primary structure comprises 337 residues: F-box protein At2g27310 (337 aa).

The region spanning 10-58 is the F-box domain; the sequence is DSISTLHSDIIQTQILTRLDGPTLASTATTSSYLQTLCTEEKLWQELSI.

This Arabidopsis thaliana (Mouse-ear cress) protein is F-box protein At2g27310.